A 473-amino-acid polypeptide reads, in one-letter code: Serine palmitoyltransferase 1 (473 aa).

The Lumenal segment spans residues 1 to 15; it reads MAMAAEQWVLVEMVQ. Residues 1-66 are interaction with SPTLC2; the sequence is MAMAAEQWVL…KEELIEEWQP (66 aa). Residues 16 to 36 form a helical membrane-spanning segment; the sequence is ALYEAPAYHLILEGILILWII. The Cytoplasmic portion of the chain corresponds to 37–473; sequence RLVFSKTYKL…IREAAQAVLL (437 aa). The residue at position 164 (Y164) is a Phosphotyrosine; by ABL.

The protein belongs to the class-II pyridoxal-phosphate-dependent aminotransferase family. In terms of assembly, component of the serine palmitoyltransferase (SPT) complex, which is also composed of SPTLC2 or SPTLC3 and SPTSSA or SPTSSB. The heterodimer with SPTLC2 or SPTLC3 forms the catalytic core of the enzyme, while SPTSSA or SPTSSB subunits determine substrate specificity. SPT also interacts with ORMDL proteins, especially ORMDL3, which negatively regulate SPT activity in the presence of ceramides. Forms dimers of heterodimers with SPTLC2. Interacts with RTN4. It depends on pyridoxal 5'-phosphate as a cofactor. Post-translationally, phosphorylation at Tyr-164 inhibits activity and promotes cell survival.

The protein resides in the endoplasmic reticulum membrane. The enzyme catalyses L-serine + hexadecanoyl-CoA + H(+) = 3-oxosphinganine + CO2 + CoA. It carries out the reaction octadecanoyl-CoA + L-serine + H(+) = 3-oxoeicosasphinganine + CO2 + CoA. The catalysed reaction is tetradecanoyl-CoA + L-serine + H(+) = 3-oxohexadecasphinganine + CO2 + CoA. It catalyses the reaction dodecanoyl-CoA + L-serine + H(+) = 3-oxotetradecasphinganine + CO2 + CoA. It functions in the pathway lipid metabolism; sphingolipid metabolism. SPT complex catalytic activity is negatively regulated by ORMDL proteins, including ORMDL3, in the presence of ceramides. This mechanism allows to maintain ceramide levels at sufficient concentrations for the production of complex sphingolipids, but which prevents the accumulation of ceramides to levels that trigger apoptosis. Functionally, component of the serine palmitoyltransferase multisubunit enzyme (SPT) that catalyzes the initial and rate-limiting step in sphingolipid biosynthesis by condensing L-serine and activated acyl-CoA (most commonly palmitoyl-CoA) to form long-chain bases. The SPT complex is also composed of SPTLC2 or SPTLC3 and SPTSSA or SPTSSB. Within this complex, the heterodimer with SPTLC2 or SPTLC3 forms the catalytic core. The composition of the serine palmitoyltransferase (SPT) complex determines the substrate preference. The SPTLC1-SPTLC2-SPTSSA complex shows a strong preference for C16-CoA substrate, while the SPTLC1-SPTLC3-SPTSSA isozyme uses both C14-CoA and C16-CoA as substrates, with a slight preference for C14-CoA. The SPTLC1-SPTLC2-SPTSSB complex shows a strong preference for C18-CoA substrate, while the SPTLC1-SPTLC3-SPTSSB isozyme displays an ability to use a broader range of acyl-CoAs, without apparent preference. Required for adipocyte cell viability and metabolic homeostasis. In Cricetulus griseus (Chinese hamster), this protein is Serine palmitoyltransferase 1 (SPTLC1).